Consider the following 287-residue polypeptide: Glutamate racemase (287 aa).

Positions 1 to 15 (MATKPQDANTTSREA) are enriched in polar residues. The segment at 1-25 (MATKPQDANTTSREAITSKADSPPR) is disordered. Substrate contacts are provided by residues 32 to 33 (DS) and 64 to 65 (YG). The active-site Proton donor/acceptor is Cys-96. Substrate is bound at residue 97 to 98 (NT). Residue Cys-208 is the Proton donor/acceptor of the active site. Position 209–210 (209–210 (TH)) interacts with substrate.

It belongs to the aspartate/glutamate racemases family.

The catalysed reaction is L-glutamate = D-glutamate. The protein operates within cell wall biogenesis; peptidoglycan biosynthesis. In terms of biological role, provides the (R)-glutamate required for cell wall biosynthesis. This is Glutamate racemase from Yersinia pseudotuberculosis serotype O:1b (strain IP 31758).